The following is a 270-amino-acid chain: Centriole, cilia and spindle-associated protein (270 aa).

At Met-1 the chain carries N-acetylmethionine. The ST]-E-Y-X(3)-Y motif 1; required for efficient microtubule binding and stabilization motif lies at 9-15 (SEYMKRY). 2 disordered regions span residues 50–201 (DDWG…SQKT) and 231–255 (LVAQ…SSSE). Over residues 53–67 (GPAGSSEDSASSESS) the composition is skewed to low complexity. Over residues 75 to 86 (RCAPPSPPPPVE) the composition is skewed to pro residues. Residues 92–101 (EAERRARGAP) show a composition bias toward basic and acidic residues. Over residues 102 to 118 (EEQDAEAGDAEAEDAED) the composition is skewed to acidic residues. The segment covering 127–144 (KDVEDKPEQQTRTRETDK) has biased composition (basic and acidic residues). Over residues 145 to 156 (SPTSTEPRQQPS) the composition is skewed to polar residues. An ST]-E-Y-X(3)-Y motif 2; required for efficient microtubule binding and stabilization motif is present at residues 260 to 266 (TEYMRCY).

The protein belongs to the CCSAP family. In terms of assembly, associates with microtubules; the association occurs on polyglutamylated tubulin.

It localises to the cytoplasm. The protein localises to the cytoskeleton. Its subcellular location is the microtubule organizing center. It is found in the centrosome. The protein resides in the centriole. It localises to the spindle. The protein localises to the cilium basal body. Its subcellular location is the cilium axoneme. It is found in the cell projection. The protein resides in the axon. It localises to the cilium. Its function is as follows. Plays a role in microtubule (MT) stabilization and this stabilization involves the maintenance of NUMA1 at the spindle poles. Colocalizes with polyglutamylated MTs to promote MT stabilization and regulate bipolar spindle formation in mitosis. Binding of CCSAP to centrosomes and the spindle around centrosomes during mitosis inhibits MT depolymerization, thereby stabilizing the mitotic spindle. May play a role in embryonic development. May be required for proper cilia beating. The chain is Centriole, cilia and spindle-associated protein (CCSAP) from Homo sapiens (Human).